We begin with the raw amino-acid sequence, 136 residues long: Small ribosomal subunit protein uS8c (136 aa).

Belongs to the universal ribosomal protein uS8 family. Part of the 30S ribosomal subunit.

It localises to the plastid. Its subcellular location is the chloroplast. One of the primary rRNA binding proteins, it binds directly to 16S rRNA central domain where it helps coordinate assembly of the platform of the 30S subunit. This chain is Small ribosomal subunit protein uS8c (rps8), found in Oryza sativa subsp. indica (Rice).